We begin with the raw amino-acid sequence, 894 residues long: Microsomal triglyceride transfer protein large subunit (894 aa).

The first 18 residues, Met1–Ser18, serve as a signal peptide directing secretion. Positions Leu28–Leu659 constitute a Vitellogenin domain. Residues Cys174 and Cys194 are joined by a disulfide bond.

Heterodimer; heterodimerizes with the protein disulfide isomerase (P4HB/PDI). Interacts with APOB. Interacts with PRAP1. In terms of tissue distribution, liver and small intestine. Also found in ovary, testis and kidney.

It is found in the endoplasmic reticulum. It localises to the golgi apparatus. The enzyme catalyses a 1,2-diacyl-sn-glycero-3-phosphocholine(in) = a 1,2-diacyl-sn-glycero-3-phosphocholine(out). It catalyses the reaction a 1,2-diacyl-sn-glycero-3-phosphoethanolamine(in) = a 1,2-diacyl-sn-glycero-3-phosphoethanolamine(out). It carries out the reaction a cholesterol ester(in) = a cholesterol ester(out). The catalysed reaction is a triacyl-sn-glycerol(in) = a triacyl-sn-glycerol(out). In terms of biological role, catalyzes the transport of triglyceride, cholesteryl ester, and phospholipid between phospholipid surfaces. Required for the assembly and secretion of plasma lipoproteins that contain apolipoprotein B. May be involved in regulating cholesteryl ester biosynthesis in cells that produce lipoproteins. In Homo sapiens (Human), this protein is Microsomal triglyceride transfer protein large subunit (MTTP).